The chain runs to 681 residues: PTS system glucose-specific EIICBA component (681 aa).

Positions 3-414 constitute a PTS EIIC type-1 domain; that stretch reads KKLFGQLQRI…LKYKTPGRED (412 aa). 10 helical membrane passes run 16–36, 73–93, 126–146, 170–190, 199–219, 273–293, 303–323, 328–348, 355–375, and 383–403; these read LMLP…GTAM, MIFA…AAIA, ILGI…GALA, FVPI…ALIW, AFST…FGFI, FMQG…LAIY, VVAG…ITEP, FLFV…LSFL, LHLG…GILP, and VIPV…FLIV. The PTS EIIB type-1 domain maps to 425–506; it reads TELPYAVLEA…QQIMNGQVVE (82 aa). Cys-447 functions as the Phosphocysteine intermediate; for EIIB activity in the catalytic mechanism. In terms of domain architecture, PTS EIIA type-1 spans 551 to 655; it reads DQVFSEKMMG…SDITPIIVTQ (105 aa). Catalysis depends on His-603, which acts as the Tele-phosphohistidine intermediate; for EIIA activity.

It is found in the cell membrane. It carries out the reaction N(pros)-phospho-L-histidyl-[protein] + D-glucose(out) = D-glucose 6-phosphate(in) + L-histidyl-[protein]. The phosphoenolpyruvate-dependent sugar phosphotransferase system (sugar PTS), a major carbohydrate active transport system, catalyzes the phosphorylation of incoming sugar substrates concomitantly with their translocation across the cell membrane. This system is involved in glucose transport. This is PTS system glucose-specific EIICBA component (ptsG) from Staphylococcus aureus (strain MRSA252).